We begin with the raw amino-acid sequence, 208 residues long: Ectodysplasin-A receptor-associated adapter protein (208 aa).

Positions M1–V18 are enriched in basic and acidic residues. Residues M1–S99 are disordered. Polar residues predominate over residues T49–Q61. Residues D116 to E195 form the Death domain.

As to quaternary structure, binds EDAR. Self-associates and binds TRAF1, TRAF2 and TRAF3.

It localises to the cytoplasm. Adapter protein that interacts with EDAR DEATH domain and couples the receptor to EDA signaling pathway during morphogenesis of ectodermal organs. Mediates the activation of NF-kappa-B. This Mus musculus (Mouse) protein is Ectodysplasin-A receptor-associated adapter protein (Edaradd).